Reading from the N-terminus, the 470-residue chain is Transcriptional activator PmfR (470 aa).

As to quaternary structure, forms oligomers in solution, probably homotetramers.

Its pathway is alkaloid degradation; nicotine degradation [regulation]. In terms of biological role, transcriptional regulator involved in the activation of the purU-mabO-folD-nepA-nepB and mao-ORF55-nbr operons implicated in the nicotine catabolic pathway. The sequence GTTT-14 bp-AAAC seems to be the core binding site of the regulator upstream of the -35 promoter region of the operon. The protein is Transcriptional activator PmfR (pmfR) of Paenarthrobacter nicotinovorans (Arthrobacter nicotinovorans).